The primary structure comprises 274 residues: Probable cyclic nucleotide phosphodiesterase RPA0124 (274 aa).

Fe cation-binding residues include D8, H10, D49, N79, H155, H194, and H196. AMP contacts are provided by residues H10, D49, and 79-80; that span reads NH. AMP is bound at residue H196.

It belongs to the cyclic nucleotide phosphodiesterase class-III family. It depends on Fe(2+) as a cofactor.

This is Probable cyclic nucleotide phosphodiesterase RPA0124 from Rhodopseudomonas palustris (strain ATCC BAA-98 / CGA009).